We begin with the raw amino-acid sequence, 462 residues long: NAD-capped RNA hydrolase NUDT12 (462 aa).

ANK repeat units follow at residues 11 to 40 (EIVTQFHCSAAEGDIAKLTGILSHSPSLLN), 45 to 74 (NGWTALMYAARNGHPEIVQFLLEKGCDRSI), and 78 to 98 (SRQTALDIAVFWGYKHIANLL). Lysine 185 is modified (N6-succinyllysine). Residues cysteine 284 and cysteine 287 each contribute to the Zn(2+) site. The residue at position 292 (lysine 292) is an N6-succinyllysine. Residues cysteine 302 and cysteine 307 each coordinate Zn(2+). Residues tyrosine 318, 354 to 356 (AGF), glutamate 370, glutamate 374, and glutamate 415 each bind substrate. Residues 319–453 (PRVDPVVIMQ…SRAIAHQLIK (135 aa)) enclose the Nudix hydrolase domain. Mg(2+) contacts are provided by alanine 354, glutamate 370, glutamate 374, and glutamate 415. A Nudix box motif is present at residues 355–376 (GFIEPGETIEDAVRREVEEESG). Positions 460–462 (PNL) match the Microbody targeting signal motif.

This sequence belongs to the Nudix hydrolase family. NudC subfamily. As to quaternary structure, homodimer. Homodimerization is essential for its catalytic activity and protein stability. Interacts (via ANK repeats) with BLMH. Requires Mg(2+) as cofactor. The cofactor is Zn(2+).

It localises to the cytoplasm. The protein localises to the peroxisome. Its subcellular location is the cytoplasmic granule. It catalyses the reaction a 5'-end NAD(+)-phospho-ribonucleoside in mRNA + H2O = a 5'-end phospho-adenosine-phospho-ribonucleoside in mRNA + beta-nicotinamide D-ribonucleotide + 2 H(+). The catalysed reaction is NAD(+) + H2O = beta-nicotinamide D-ribonucleotide + AMP + 2 H(+). It carries out the reaction NADH + H2O = reduced beta-nicotinamide D-ribonucleotide + AMP + 2 H(+). The enzyme catalyses NADPH + H2O = reduced beta-nicotinamide D-ribonucleotide + adenosine 2',5'-bisphosphate + 2 H(+). MRNA decapping enzyme that specifically removes the nicotinamide adenine dinucleotide (NAD) cap from a subset of mRNAs by hydrolyzing the diphosphate linkage to produce nicotinamide mononucleotide (NMN) and 5' monophosphate mRNA. The NAD-cap is present at the 5'-end of some RNAs; in contrast to the canonical N7 methylguanosine (m7G) cap, the NAD cap promotes mRNA decay. Preferentially acts on NAD-capped transcripts in response to nutrient stress. Also acts on free nicotinamide adenine dinucleotide molecules: hydrolyzes NAD(H) into NMN(H) and AMP, and NADPH into NMNH and 2',5'-ADP. May act to regulate the concentration of peroxisomal nicotinamide nucleotide cofactors required for oxidative metabolism in this organelle. Regulates the levels of circadian clock components PER1, PER2, PER3 and CRY2 in the liver. This is NAD-capped RNA hydrolase NUDT12 from Macaca fascicularis (Crab-eating macaque).